The sequence spans 650 residues: Threonine--tRNA ligase (650 aa).

The TGS domain occupies 5 to 67 (NKSMFIKLKD…QEGDQVILWG (63 aa)). Residues 246–537 (DHKLLGAKLD…LIEHYVGKFP (292 aa)) are catalytic. Residues Cys337, His388, and His514 each coordinate Zn(2+).

The protein belongs to the class-II aminoacyl-tRNA synthetase family. In terms of assembly, homodimer. It depends on Zn(2+) as a cofactor.

It localises to the cytoplasm. The catalysed reaction is tRNA(Thr) + L-threonine + ATP = L-threonyl-tRNA(Thr) + AMP + diphosphate + H(+). In terms of biological role, catalyzes the attachment of threonine to tRNA(Thr) in a two-step reaction: L-threonine is first activated by ATP to form Thr-AMP and then transferred to the acceptor end of tRNA(Thr). Also edits incorrectly charged L-seryl-tRNA(Thr). The protein is Threonine--tRNA ligase of Protochlamydia amoebophila (strain UWE25).